A 96-amino-acid chain; its full sequence is Citrate lyase acyl carrier protein (96 aa).

Position 14 is an O-(phosphoribosyl dephospho-coenzyme A)serine (Ser14).

This sequence belongs to the CitD family. As to quaternary structure, oligomer with a subunit composition of (alpha,beta,gamma)6.

The protein resides in the cytoplasm. Its function is as follows. Covalent carrier of the coenzyme of citrate lyase. The chain is Citrate lyase acyl carrier protein from Lactococcus lactis subsp. lactis (strain IL1403) (Streptococcus lactis).